We begin with the raw amino-acid sequence, 161 residues long: Probable endopeptidase HI_1314 (161 aa).

An N-terminal signal peptide occupies residues 1–18 (MKVYKSFLIATASLFLFA). The N-palmitoyl cysteine moiety is linked to residue C19. A lipid anchor (S-diacylglycerol cysteine) is attached at C19. Positions 39–161 (IMAIAMLSEQ…SKAFWQVRRI (123 aa)) constitute a NlpC/P60 domain. C69 functions as the Nucleophile in the catalytic mechanism. Catalysis depends on H122, which acts as the Proton acceptor. Residue H134 is part of the active site.

It belongs to the peptidase C40 family.

The protein localises to the cell membrane. The polypeptide is Probable endopeptidase HI_1314 (Haemophilus influenzae (strain ATCC 51907 / DSM 11121 / KW20 / Rd)).